A 141-amino-acid polypeptide reads, in one-letter code: Nucleoside diphosphate kinase (141 aa).

K11, F59, R87, T93, R104, and N114 together coordinate ATP. H117 serves as the catalytic Pros-phosphohistidine intermediate.

The protein belongs to the NDK family. As to quaternary structure, homotetramer. Mg(2+) serves as cofactor.

Its subcellular location is the cytoplasm. It carries out the reaction a 2'-deoxyribonucleoside 5'-diphosphate + ATP = a 2'-deoxyribonucleoside 5'-triphosphate + ADP. It catalyses the reaction a ribonucleoside 5'-diphosphate + ATP = a ribonucleoside 5'-triphosphate + ADP. Functionally, major role in the synthesis of nucleoside triphosphates other than ATP. The ATP gamma phosphate is transferred to the NDP beta phosphate via a ping-pong mechanism, using a phosphorylated active-site intermediate. This Histophilus somni (strain 129Pt) (Haemophilus somnus) protein is Nucleoside diphosphate kinase.